Consider the following 552-residue polypeptide: Beta-hexosaminidase A (552 aa).

Residues 1-15 (MRLIVLSLLFTSTLA) form the signal peptide. Asn-44 carries N-linked (GlcNAc...) asparagine glycosylation. The active-site Proton donor is the Glu-322. Residues Asn-348, Asn-409, and Asn-457 are each glycosylated (N-linked (GlcNAc...) asparagine).

It belongs to the glycosyl hydrolase 20 family.

The protein resides in the lysosome. It catalyses the reaction Hydrolysis of terminal non-reducing N-acetyl-D-hexosamine residues in N-acetyl-beta-D-hexosaminides.. Functionally, responsible for the degradation of GM2 gangliosides, and a variety of other molecules containing terminal N-acetyl hexosamines. Degrades chitotriose. In Caenorhabditis briggsae, this protein is Beta-hexosaminidase A.